A 171-amino-acid chain; its full sequence is Peptidyl-prolyl cis-trans isomerase (171 aa).

The PPIase cyclophilin-type domain occupies 7–170; it reads FFDLTIGGAP…KPVVIADCGQ (164 aa).

Belongs to the cyclophilin-type PPIase family. Expressed in leaves, floral buds, growing shoots and stamens at anthesis.

Its subcellular location is the cytoplasm. It carries out the reaction [protein]-peptidylproline (omega=180) = [protein]-peptidylproline (omega=0). With respect to regulation, binds cyclosporin A (CsA). CsA mediates some of its effects via an inhibitory action on PPIase. Its function is as follows. PPIases accelerate the folding of proteins. It catalyzes the cis-trans isomerization of proline imidic peptide bonds in oligopeptides. This Solanum lycopersicum (Tomato) protein is Peptidyl-prolyl cis-trans isomerase.